We begin with the raw amino-acid sequence, 135 residues long: Large-conductance mechanosensitive channel (135 aa).

Helical transmembrane passes span 10 to 30 (FAMR…GAFG) and 76 to 96 (GSFI…FCVI).

This sequence belongs to the MscL family. Homopentamer.

It localises to the cell inner membrane. In terms of biological role, channel that opens in response to stretch forces in the membrane lipid bilayer. May participate in the regulation of osmotic pressure changes within the cell. This is Large-conductance mechanosensitive channel from Campylobacter concisus (strain 13826).